The chain runs to 37 residues: Large ribosomal subunit protein bL36c (37 aa).

Belongs to the bacterial ribosomal protein bL36 family.

Its subcellular location is the plastid. The protein localises to the chloroplast. The sequence is that of Large ribosomal subunit protein bL36c from Cyanidioschyzon merolae (strain NIES-3377 / 10D) (Unicellular red alga).